A 223-amino-acid chain; its full sequence is Deoxyribose-phosphate aldolase (223 aa).

Residue Asp89 is the Proton donor/acceptor of the active site. Catalysis depends on Lys152, which acts as the Schiff-base intermediate with acetaldehyde. The active-site Proton donor/acceptor is the Lys181.

It belongs to the DeoC/FbaB aldolase family. DeoC type 1 subfamily.

The protein localises to the cytoplasm. It catalyses the reaction 2-deoxy-D-ribose 5-phosphate = D-glyceraldehyde 3-phosphate + acetaldehyde. It functions in the pathway carbohydrate degradation; 2-deoxy-D-ribose 1-phosphate degradation; D-glyceraldehyde 3-phosphate and acetaldehyde from 2-deoxy-alpha-D-ribose 1-phosphate: step 2/2. In terms of biological role, catalyzes a reversible aldol reaction between acetaldehyde and D-glyceraldehyde 3-phosphate to generate 2-deoxy-D-ribose 5-phosphate. The chain is Deoxyribose-phosphate aldolase from Bacillus cytotoxicus (strain DSM 22905 / CIP 110041 / 391-98 / NVH 391-98).